The following is an 844-amino-acid chain: Lysine-specific histone demethylase 1 homolog 1 (844 aa).

Positions 1–18 (MSTETKETRPETKPEDLG) are enriched in basic and acidic residues. The tract at residues 1–131 (MSTETKETRP…PGPRARKRRR (131 aa)) is disordered. A compositionally biased stretch (acidic residues) spans 26–40 (PGEEPLGELIADDVN). Polar residues-rich tracts occupy residues 46 to 62 (ASAT…QSEQ) and 107 to 118 (DLVTEQQSQNPN). The 102-residue stretch at 154-255 (GKEVDSEALI…FGLAPVIKEA (102 aa)) folds into the SWIRM domain. FAD-binding residues include glutamate 295, arginine 297, and arginine 303. A Nuclear localization signal motif is present at residues 516–523 (LKKGSIEF). Glutamate 679 provides a ligand contact to FAD.

This sequence belongs to the flavin monoamine oxidase family. As to quaternary structure, interacts with CZS. Interacts with OTU6/OTLD1. FAD serves as cofactor. As to expression, expressed in the shoot and root apical regions of young seedlings. Expressed in cotyledons and inflorescences.

It localises to the nucleus. Its subcellular location is the cytoplasm. Functionally, probable histone demethylase that reduces the levels of histone H3 'Lys-4' methylation in chromatin of the floral repressor FLOWERING LOCUS C (FLC) and the sporophytically silenced floral repressor FWA. Seems to act in partial redundancy with FLOWERING LOCUS D (FLD) to repress FLC expression. Required for cytosine methylation of FWA. Controls primary seed dormancy by regulating DOG1 and abscisic acid signaling-related genes. In association with OTU6/OTLD1, involved in transcriptional gene repression via histone deubiquitination and demethylation. The chain is Lysine-specific histone demethylase 1 homolog 1 from Arabidopsis thaliana (Mouse-ear cress).